The primary structure comprises 421 residues: Anthranilate synthase component 1 (421 aa).

Residues Ser-31 and 207 to 209 each bind L-tryptophan; that span reads PYM. 242 to 243 contacts chorismate; it reads GT. A Mg(2+)-binding site is contributed by Glu-269. Residues Tyr-357, Arg-377, 391 to 393, and Gly-393 contribute to the chorismate site; that span reads GAG. Glu-406 contacts Mg(2+).

It belongs to the anthranilate synthase component I family. Heterotetramer consisting of two non-identical subunits: a beta subunit (TrpG) and a large alpha subunit (TrpE). Mg(2+) serves as cofactor.

It catalyses the reaction chorismate + L-glutamine = anthranilate + pyruvate + L-glutamate + H(+). The protein operates within amino-acid biosynthesis; L-tryptophan biosynthesis; L-tryptophan from chorismate: step 1/5. With respect to regulation, cooperatively feedback inhibited by tryptophan. Part of a heterotetrameric complex that catalyzes the two-step biosynthesis of anthranilate, an intermediate in the biosynthesis of L-tryptophan. In the first step, the glutamine-binding beta subunit (TrpG) of anthranilate synthase (AS) provides the glutamine amidotransferase activity which generates ammonia as a substrate that, along with chorismate, is used in the second step, catalyzed by the large alpha subunit of AS (TrpE) to produce anthranilate. In the absence of TrpG, TrpE can synthesize anthranilate directly from chorismate and high concentrations of ammonia. This chain is Anthranilate synthase component 1 (trpE), found in Saccharolobus solfataricus (strain ATCC 35092 / DSM 1617 / JCM 11322 / P2) (Sulfolobus solfataricus).